We begin with the raw amino-acid sequence, 481 residues long: MTNQDPDDGAYPSSQSDDDGIEALAINRQSRPLLAYEDQAAGQSDAFTDRDIPASTAPLTGRRRTPLSWTEVIWVSLTLLLIAVLGYSSQLYVMLPYYEKTPSFSPQALAAVLVPFNLGLLAIYYNYWLCVTTDAGSVPAGWQPEWSALEPVASLAELEHLHLVAEEEPSLELKQAIYRPRYCKTCSAFKPPRSHHCKTCQRCVLRMDHHCPWLANCVGHFNHAHFIRFLFYVDVTCLYHLIMISCRVLDSFNSYTYWREPCARELVWLVVNYALCIPVILLVGIFSLYHFYCLAVNQTTIESWEKDRTATMIRRGRVRKVKYPYDLGLWRNVRQVLGASPLVWCLPGAGARMAGDGLKYPVANGLDSGSQYRWPPKDPSRPHPSRRTWASSSSPFTYPERSNPILDPTLSTRFPHNSSPSSSDSHSSLHLPHPPSLLDPLPHHFDPPHDPDTQPVNCPKRVSVRRGSEGYEVRPHTPWSV.

The segment at 1–22 (MTNQDPDDGAYPSSQSDDDGIE) is disordered. The Cytoplasmic segment spans residues 1–66 (MTNQDPDDGA…APLTGRRRTP (66 aa)). The helical transmembrane segment at 67–87 (LSWTEVIWVSLTLLLIAVLGY) threads the bilayer. At 88–108 (SSQLYVMLPYYEKTPSFSPQA) the chain is on the lumenal side. The helical transmembrane segment at 109–129 (LAAVLVPFNLGLLAIYYNYWL) threads the bilayer. Residues 130 to 223 (CVTTDAGSVP…LANCVGHFNH (94 aa)) lie on the Cytoplasmic side of the membrane. The DHHC domain maps to 181-231 (RYCKTCSAFKPPRSHHCKTCQRCVLRMDHHCPWLANCVGHFNHAHFIRFLF). Residue Cys211 is the S-palmitoyl cysteine intermediate of the active site. Residues 224–244 (AHFIRFLFYVDVTCLYHLIMI) form a helical membrane-spanning segment. Over 245-265 (SCRVLDSFNSYTYWREPCARE) the chain is Lumenal. A helical membrane pass occupies residues 266-286 (LVWLVVNYALCIPVILLVGIF). The Cytoplasmic portion of the chain corresponds to 287-481 (SLYHFYCLAV…EVRPHTPWSV (195 aa)). The interval 370 to 481 (SQYRWPPKDP…EVRPHTPWSV (112 aa)) is disordered. The span at 418–431 (SSPSSSDSHSSLHL) shows a compositional bias: low complexity. 2 stretches are compositionally biased toward basic and acidic residues: residues 441–452 (LPHHFDPPHDPD) and 466–475 (RGSEGYEVRP).

The protein belongs to the DHHC palmitoyltransferase family. PFA4 subfamily.

The protein localises to the endoplasmic reticulum membrane. It catalyses the reaction L-cysteinyl-[protein] + hexadecanoyl-CoA = S-hexadecanoyl-L-cysteinyl-[protein] + CoA. In terms of biological role, mediates the reversible addition of palmitate to target proteins, thereby regulating their membrane association and biological function. The sequence is that of Palmitoyltransferase PFA4 from Mycosarcoma maydis (Corn smut fungus).